The primary structure comprises 255 residues: 3-deoxy-manno-octulosonate cytidylyltransferase (255 aa).

This sequence belongs to the KdsB family.

Its subcellular location is the cytoplasm. It carries out the reaction 3-deoxy-alpha-D-manno-oct-2-ulosonate + CTP = CMP-3-deoxy-beta-D-manno-octulosonate + diphosphate. It participates in nucleotide-sugar biosynthesis; CMP-3-deoxy-D-manno-octulosonate biosynthesis; CMP-3-deoxy-D-manno-octulosonate from 3-deoxy-D-manno-octulosonate and CTP: step 1/1. The protein operates within bacterial outer membrane biogenesis; lipopolysaccharide biosynthesis. Functionally, activates KDO (a required 8-carbon sugar) for incorporation into bacterial lipopolysaccharide in Gram-negative bacteria. This chain is 3-deoxy-manno-octulosonate cytidylyltransferase, found in Thermodesulfovibrio yellowstonii (strain ATCC 51303 / DSM 11347 / YP87).